Here is a 251-residue protein sequence, read N- to C-terminus: MVDKSQETTHFGFQTVAKEQKADMVAHVFHSVASKYDVMNDLMSFGIHRLWKRFTIDCSGVRRGQTVLDLAGGTGDLTAKFSRMVGETGKVVLADINESMLKMGREKLRNIGVIGNVEYVQANAEALPFPDNTFDCITISFGLRNVTEKEKALRSMYRVLKPGGRLLVLEFSKPIIEPLSKAYDAYSFHILPRIGSLVANDADSYRYLAESIRMHPDQDTLKAMMEDAGFESVDYYNLTAGVVALHRGYKF.

Residues Thr74, Asp95, 123–124 (NA), and Ser140 contribute to the S-adenosyl-L-methionine site.

Belongs to the class I-like SAM-binding methyltransferase superfamily. MenG/UbiE family.

It catalyses the reaction a 2-demethylmenaquinol + S-adenosyl-L-methionine = a menaquinol + S-adenosyl-L-homocysteine + H(+). It carries out the reaction a 2-methoxy-6-(all-trans-polyprenyl)benzene-1,4-diol + S-adenosyl-L-methionine = a 5-methoxy-2-methyl-3-(all-trans-polyprenyl)benzene-1,4-diol + S-adenosyl-L-homocysteine + H(+). It functions in the pathway quinol/quinone metabolism; menaquinone biosynthesis; menaquinol from 1,4-dihydroxy-2-naphthoate: step 2/2. It participates in cofactor biosynthesis; ubiquinone biosynthesis. Functionally, methyltransferase required for the conversion of demethylmenaquinol (DMKH2) to menaquinol (MKH2) and the conversion of 2-polyprenyl-6-methoxy-1,4-benzoquinol (DDMQH2) to 2-polyprenyl-3-methyl-6-methoxy-1,4-benzoquinol (DMQH2). This is Ubiquinone/menaquinone biosynthesis C-methyltransferase UbiE from Escherichia fergusonii (strain ATCC 35469 / DSM 13698 / CCUG 18766 / IAM 14443 / JCM 21226 / LMG 7866 / NBRC 102419 / NCTC 12128 / CDC 0568-73).